Consider the following 132-residue polypeptide: Putative RNase AF_2433 (132 aa).

Catalysis depends on residues arginine 90 and histidine 95. The RX(4)HXY motif signature appears at 90–97 (RNWLVHRY). At tyrosine 97 the chain carries O-di-AMP-tyrosine.

Belongs to the HepT RNase toxin family. In terms of assembly, homodimer, probably forms a complex with cognate antitoxin AF_2432. Post-translationally, modified by cognate antitoxin AF_2432; probably at least 2 successive AMPylation events occur on Tyr-97.

Its function is as follows. Probable toxic component of a putative type VII toxin-antitoxin (TA) system, probably an RNase. Probably neutralized by cognate antitoxin AF_2432. Neutralization may be due to AMPylation by AF_2432. In Archaeoglobus fulgidus (strain ATCC 49558 / DSM 4304 / JCM 9628 / NBRC 100126 / VC-16), this protein is Putative RNase AF_2433.